Consider the following 765-residue polypeptide: Polyribonucleotide nucleotidyltransferase (765 aa).

The Mg(2+) site is built by Asp556 and Asp562. The 60-residue stretch at 622–681 (PRITKISIPQNKIGEVIGPKGKTINQITEETGANISIEDDGTVFVSAVGGEAAEAAIEKI) folds into the KH domain. Positions 693–762 (GDRFLGTVVK…NRGKISLVPV (70 aa)) constitute an S1 motif domain.

Belongs to the polyribonucleotide nucleotidyltransferase family. It depends on Mg(2+) as a cofactor.

It is found in the cytoplasm. It catalyses the reaction RNA(n+1) + phosphate = RNA(n) + a ribonucleoside 5'-diphosphate. Involved in mRNA degradation. Catalyzes the phosphorolysis of single-stranded polyribonucleotides processively in the 3'- to 5'-direction. The protein is Polyribonucleotide nucleotidyltransferase of Corynebacterium urealyticum (strain ATCC 43042 / DSM 7109).